A 347-amino-acid polypeptide reads, in one-letter code: NADH-ubiquinone oxidoreductase chain 2 (347 aa).

A run of 10 helical transmembrane segments spans residues 13 to 33, 55 to 75, 96 to 116, 122 to 142, 151 to 171, 178 to 198, 199 to 219, 237 to 257, 274 to 294, and 326 to 346; these read IFTGTLITALSSHWFFAWLGL, AAIKYFLTQATASMILLMAIL, LMIVTALAMKLGMAPFHFWVP, VPLTSGLLLLTWQKLAPISIM, TNILLTLSILSILVGGWGGLN, ILAYSSITHMGWMMAVLPYNP, DITILNLIIYIILTTTAFLIL, LTWLMPLIPSTLLSLGGLPPL, GNLITPTIMAIITLLNLYFYV, and LPTLTILTTLLLPISPLILSI.

The protein belongs to the complex I subunit 2 family. As to quaternary structure, core subunit of respiratory chain NADH dehydrogenase (Complex I) which is composed of 45 different subunits. Interacts with TMEM242.

It is found in the mitochondrion inner membrane. It carries out the reaction a ubiquinone + NADH + 5 H(+)(in) = a ubiquinol + NAD(+) + 4 H(+)(out). Functionally, core subunit of the mitochondrial membrane respiratory chain NADH dehydrogenase (Complex I) which catalyzes electron transfer from NADH through the respiratory chain, using ubiquinone as an electron acceptor. Essential for the catalytic activity and assembly of complex I. This Pongo abelii (Sumatran orangutan) protein is NADH-ubiquinone oxidoreductase chain 2.